Reading from the N-terminus, the 319-residue chain is Homoserine dehydrogenase (319 aa).

The NADPH site is built by Phe10, Thr12, Val13, Arg40, Lys57, Ser92, Ser93, Ser114, and Lys116. Val13 lines the NAD(+) pocket. NADP(+) is bound by residues Val13 and Arg40. Residue Ser92 coordinates NAD(+). An NADP(+)-binding site is contributed by Ser92. Residues Ser114 and Lys116 each contribute to the NADP(+) site. Na(+) contacts are provided by Glu140, Val143, Ala145, and Thr147. The NADP(+) site is built by Gly197 and Glu200. Glu200 and Asp211 together coordinate L-homoserine. Lys215 serves as the catalytic Proton donor. NADPH is bound at residue Gly296. Gly296 is a binding site for NAD(+). Gly296 is a binding site for NADP(+).

This sequence belongs to the homoserine dehydrogenase family. As to quaternary structure, homodimer. The cofactor is a metal cation.

It carries out the reaction L-homoserine + NAD(+) = L-aspartate 4-semialdehyde + NADH + H(+). It functions in the pathway amino-acid biosynthesis; L-methionine biosynthesis via de novo pathway; L-homoserine from L-aspartate: step 3/3. Its pathway is amino-acid biosynthesis; L-threonine biosynthesis; L-threonine from L-aspartate: step 3/5. Its function is as follows. Catalyzes the conversion of L-aspartate-beta-semialdehyde (L-Asa) to L-homoserine (L-Hse), the third step in the biosynthesis of threonine and methionine from aspartate. Utilizes NADH but not NADPH as coenzyme. This is Homoserine dehydrogenase from Pyrococcus horikoshii (strain ATCC 700860 / DSM 12428 / JCM 9974 / NBRC 100139 / OT-3).